We begin with the raw amino-acid sequence, 857 residues long: Catalase-peroxidase (857 aa).

A cross-link (tryptophyl-tyrosyl-methioninium (Trp-Tyr) (with M-356)) is located at residues 207–330 (WHSAGTYRVS…LAAVQMGLIY (124 aa)). Catalysis depends on histidine 208, which acts as the Proton acceptor. The segment at residues 330-356 (YVNPEGPNGKPDPIAAAKDIRETFGRM) is a cross-link (tryptophyl-tyrosyl-methioninium (Tyr-Met) (with W-207)). Histidine 371 is a binding site for heme b.

It belongs to the peroxidase family. Peroxidase/catalase subfamily. Homodimer or homotetramer. Requires heme b as cofactor. In terms of processing, formation of the three residue Trp-Tyr-Met cross-link is important for the catalase, but not the peroxidase activity of the enzyme.

The catalysed reaction is H2O2 + AH2 = A + 2 H2O. It catalyses the reaction 2 H2O2 = O2 + 2 H2O. Functionally, bifunctional enzyme with both catalase and broad-spectrum peroxidase activity. This is Catalase-peroxidase from Rhodopirellula baltica (strain DSM 10527 / NCIMB 13988 / SH1).